A 431-amino-acid polypeptide reads, in one-letter code: BEL1-like homeodomain protein 5 (431 aa).

Positions Pro80–Val96 are SR/KY domain. Residues Gly128–Ile199 form a BELL domain region. Residues Ala228–Leu290 constitute a DNA-binding region (homeobox). Residues Glu302–Ser312 are compositionally biased toward basic and acidic residues. A disordered region spans residues Glu302–Thr333. Residues Thr313–Tyr322 show a composition bias toward polar residues. Over residues Asn323–Thr333 the composition is skewed to low complexity.

It belongs to the TALE/BELL homeobox family. As to quaternary structure, may form heterodimeric complexes with TALE/KNOX proteins. Interacts with OFP1.

It is found in the nucleus. This is BEL1-like homeodomain protein 5 (BLH5) from Arabidopsis thaliana (Mouse-ear cress).